A 206-amino-acid chain; its full sequence is Guanylate kinase (206 aa).

The 179-residue stretch at 7 to 185 (GLLIVISGPS…AVEKIRAIII (179 aa)) folds into the Guanylate kinase-like domain. An ATP-binding site is contributed by 14–21 (GPSGAGKG).

It belongs to the guanylate kinase family.

The protein resides in the cytoplasm. It carries out the reaction GMP + ATP = GDP + ADP. Its function is as follows. Essential for recycling GMP and indirectly, cGMP. The chain is Guanylate kinase from Caldanaerobacter subterraneus subsp. tengcongensis (strain DSM 15242 / JCM 11007 / NBRC 100824 / MB4) (Thermoanaerobacter tengcongensis).